The following is a 246-amino-acid chain: mRNA-decapping protein g5R (246 aa).

The Nudix hydrolase domain occupies 91-239; sequence KYQKFKKNWL…IIGPAFNFIK (149 aa). Residues 128–149 carry the Nudix box motif; that stretch reads GKPKENESDLACAIREFEEETG. Glu-134 provides a ligand contact to Mg(2+). Glu-143 (nucleophile) is an active-site residue. Positions 147 and 169 each coordinate Mg(2+).

Belongs to the Nudix hydrolase family. DIPP subfamily. As to quaternary structure, interacts with host RPL23A. Mg(2+) is required as a cofactor. The cofactor is Mn(2+).

The protein localises to the host rough endoplasmic reticulum. The catalysed reaction is diphospho-myo-inositol polyphosphate + H2O = myo-inositol polyphosphate + phosphate.. Functionally, decapping enzyme required for the removal of the 5'-end m7GpppN cap tethered to viral and host mRNAs to allow their decay in cells. May therefore accelerate viral and cellular mRNA turnover to eliminate competing host mRNAs and allow stage-specific synthesis of viral proteins. Acceleration of the turnover of cellular transcripts may even promote the shutoff of host protein synthesis. In addition to the mRNA cap, g5R also efficiently hydrolyzes diphosphoinositol polyphosphates. Down-regulation of the level of PP-InsP5 (diphosphoinositol pentakisphosphate) may play a role in viral manipulation of the cellular secretory pathway, a step necessary for the formation of virions. Binds viral and cellular poly(A) mRNAs, thereby decreasing both types of mRNAs. The sequence is that of mRNA-decapping protein g5R from African swine fever virus (isolate Pig/Kenya/KEN-50/1950) (ASFV).